We begin with the raw amino-acid sequence, 706 residues long: Polycomb protein SCMH1 (706 aa).

2 MBT repeats span residues 28-126 (FTWD…LQPP) and 134-235 (SSWP…LQPP). 2 disordered regions span residues 233 to 350 (QPPG…TVPS) and 576 to 595 (GSDR…RDPS). Basic residues-rich tracts occupy residues 272–283 (RGRKPGKKRGRT) and 304–319 (FPKK…RKPR). The segment covering 329–340 (PTTSTPEPDTST) has biased composition (low complexity). Positions 576–591 (GSDRHLESRDPPRLSG) are enriched in basic and acidic residues. The region spanning 597–662 (WTVEDVMQFV…SFHIDRLKQV (66 aa)) is the SAM domain.

It belongs to the SCM family. In terms of assembly, associates with a PRC1-like complex. Interacts with the SAM domain of PHC1 via its SAM domain in vitro. In terms of tissue distribution, most abundant in testis. Moderate levels detected in heart, brain, lung, liver, skeletal muscle and kidney and lower levels in spleen.

Its subcellular location is the nucleus. Associates with Polycomb group (PcG) multiprotein complexes; the complex class is required to maintain the transcriptionally repressive state of some genes. This is Polycomb protein SCMH1 from Mus musculus (Mouse).